The following is a 298-amino-acid chain: Protease HtpX homolog (298 aa).

2 consecutive transmembrane segments (helical) span residues 14–34 (VVLLVVFFALLALIGASAGYL) and 39–59 (YAMGLVLALVIGVIYATSMIF). Zn(2+) is bound at residue His143. Glu144 is a catalytic residue. His147 serves as a coordination point for Zn(2+). 2 helical membrane passes run 158 to 178 (IAVALASAVTVISSIGGRMLW) and 197 to 217 (IITLLLSLLSLLLAPLVASLI). Glu226 contributes to the Zn(2+) binding site.

Belongs to the peptidase M48B family. Zn(2+) is required as a cofactor.

The protein localises to the cell membrane. The sequence is that of Protease HtpX homolog from Streptococcus pyogenes serotype M28 (strain MGAS6180).